A 142-amino-acid chain; its full sequence is Large ribosomal subunit protein uL13 (142 aa).

It belongs to the universal ribosomal protein uL13 family. As to quaternary structure, part of the 50S ribosomal subunit.

Its function is as follows. This protein is one of the early assembly proteins of the 50S ribosomal subunit, although it is not seen to bind rRNA by itself. It is important during the early stages of 50S assembly. This chain is Large ribosomal subunit protein uL13, found in Sodalis glossinidius (strain morsitans).